Reading from the N-terminus, the 426-residue chain is Glutamate-1-semialdehyde 2,1-aminomutase (426 aa).

Lys265 carries the N6-(pyridoxal phosphate)lysine modification.

This sequence belongs to the class-III pyridoxal-phosphate-dependent aminotransferase family. HemL subfamily. Homodimer. Pyridoxal 5'-phosphate is required as a cofactor.

The protein resides in the cytoplasm. The catalysed reaction is (S)-4-amino-5-oxopentanoate = 5-aminolevulinate. It functions in the pathway porphyrin-containing compound metabolism; protoporphyrin-IX biosynthesis; 5-aminolevulinate from L-glutamyl-tRNA(Glu): step 2/2. This is Glutamate-1-semialdehyde 2,1-aminomutase from Shigella flexneri serotype 5b (strain 8401).